The following is a 53-amino-acid chain: Cytochrome c-552 (53 aa).

4 residues coordinate heme c: C19, C22, H23, and M44.

In terms of processing, binds 1 heme c group covalently per subunit.

The protein localises to the cell membrane. The chain is Cytochrome c-552 from Schinkia azotoformans (Bacillus azotoformans).